Reading from the N-terminus, the 355-residue chain is Undecaprenyl-phosphate alpha-N-acetylglucosaminyl 1-phosphate transferase (355 aa).

Transmembrane regions (helical) follow at residues 1–21 (MLSI…MRPL), 39–59 (GTIP…YYLM), 63–83 (QLRL…IGIL), 123–143 (FQLT…IAII), 182–202 (WSFA…GIPF), 208–228 (VFMG…ILLL), 237–257 (MNPV…VAII), and 315–335 (WAMF…ITHA).

The protein belongs to the glycosyltransferase 4 family. WecA subfamily. Mg(2+) serves as cofactor. Mn(2+) is required as a cofactor.

It localises to the cell inner membrane. It catalyses the reaction di-trans,octa-cis-undecaprenyl phosphate + UDP-N-acetyl-alpha-D-glucosamine = N-acetyl-alpha-D-glucosaminyl-di-trans,octa-cis-undecaprenyl diphosphate + UMP. It participates in bacterial outer membrane biogenesis; LPS O-antigen biosynthesis. Functionally, catalyzes the transfer of the GlcNAc-1-phosphate moiety from UDP-GlcNAc onto the carrier lipid undecaprenyl phosphate (C55-P), yielding GlcNAc-pyrophosphoryl-undecaprenyl (GlcNAc-PP-C55). This is Undecaprenyl-phosphate alpha-N-acetylglucosaminyl 1-phosphate transferase from Haemophilus influenzae (strain ATCC 51907 / DSM 11121 / KW20 / Rd).